The primary structure comprises 95 residues: MGNSKSKSNPSSSSESQKGAPTVTEFRRTAIHSLYGRYNCKCCWFADKNLIKCSDHYLCLRCLNVMLKNSDLCNICWEQLPTCITVPEEPSAPPE.

Over residues 1-16 (MGNSKSKSNPSSSSES) the composition is skewed to low complexity. The disordered stretch occupies residues 1–23 (MGNSKSKSNPSSSSESQKGAPTV). A lipid anchor (N-myristoyl glycine; by host) is attached at glycine 2. An RING-type; atypical zinc finger spans residues 40 to 76 (CKCCWFADKNLIKCSDHYLCLRCLNVMLKNSDLCNIC). Positions 90–93 (PSAP) match the PTAP/PSAP motif motif.

This sequence belongs to the arenaviridae Z protein family. In terms of assembly, interacts with protein NP; this interaction probably directs the encapsidated genome to budding sites. Interacts (via RING domain) with polymerase L; this interaction inhibits viral transcription and replication, Z partially blocks the product exit tunnel for the releasing nascent RNA product. Interacts with the glycoprotein complex; this interaction plays a role in virion budding. Interacts with host eIF4E; this interaction results in eIF4E reduced affinity for its substrate, the 5'-m7 G cap structure. Interacts (via late-budding domain) with host TSG101; this interaction is essential for budding and release of viral particles. Interacts with host RPLP0; this interaction may serve to load ribosome-like particles inside the virion. Interacts with host PML; this interaction induces PML bodies redistribution in the cytoplasm upon viral infection. Post-translationally, myristoylation is required for the role of RING finger protein Z in assembly and budding.

The protein localises to the virion. The protein resides in the host cytoplasm. It is found in the host perinuclear region. It localises to the host cell membrane. Plays a crucial role in virion assembly and budding. Expressed late in the virus life cycle, it acts as an inhibitor of viral transcription and RNA synthesis by interacting with the viral polymerase L. Presumably recruits the NP encapsidated genome to cellular membranes at budding sites via direct interaction with NP. Plays critical roles in the final steps of viral release by interacting with host TSG101, a member of the vacuolar protein-sorting pathway and using other cellular host proteins involved in vesicle formation pathway. The budding of the virus progeny occurs after association of protein Z with the viral glycoprotein complex SSP-GP1-GP2 at the cell periphery, step that requires myristoylation of protein Z. Also selectively represses protein production by associating with host eIF4E. In cell-based minigenome assay, has an inhibitory effect on the ribonucleoprotein machinery (vRNP), which is responsible for the replication and transcription of the viral genome. The chain is RING finger protein Z from Guanarito mammarenavirus (isolate Human/Venezuela/NH-95551/1990) (GTOV).